Here is a 449-residue protein sequence, read N- to C-terminus: uncharacterized protein (449 aa).

It is found in the mitochondrion. This is an uncharacterized protein from Podospora anserina (strain S / ATCC MYA-4624 / DSM 980 / FGSC 10383) (Pleurage anserina).